The primary structure comprises 373 residues: Probable G-protein coupled receptor 173 (373 aa).

At methionine 1–leucine 26 the chain is on the extracellular side. The N-linked (GlcNAc...) asparagine glycan is linked to asparagine 3. Residues valine 27 to valine 47 form a helical membrane-spanning segment. Over leucine 48–tyrosine 59 the chain is Cytoplasmic. A helical membrane pass occupies residues phenylalanine 60–leucine 80. Residues alanine 81–lysine 97 are Extracellular-facing. Cysteine 96 and cysteine 174 are oxidised to a cystine. A helical transmembrane segment spans residues isoleucine 98–serine 118. At valine 119 to threonine 139 the chain is on the cytoplasmic side. The helical transmembrane segment at cysteine 140–phenylalanine 160 threads the bilayer. Over aspartate 161 to glycine 188 the chain is Extracellular. The N-linked (GlcNAc...) asparagine glycan is linked to asparagine 184. The chain crosses the membrane as a helical span at residues phenylalanine 189–leucine 209. The Cytoplasmic segment spans residues phenylalanine 210–methionine 287. Residues phenylalanine 288–tryptophan 308 traverse the membrane as a helical segment. The Extracellular segment spans residues arginine 309 to leucine 322. A helical transmembrane segment spans residues alanine 323–leucine 343. Residues asparagine 344 to methionine 373 are Cytoplasmic-facing.

It belongs to the G-protein coupled receptor 1 family. Expressed in the ovary, specifically in granulosa cells of follicles that have passed the primary stage and in oocytes (at protein level). Expressed in preadipocytes.

The protein resides in the cell membrane. Functionally, is a receptor for the SMIM20 derived peptides Phoenixin-14 and Phoenixin-20. It mediates the Phoenixin-14 and Phoenixin-20 augmentation of gonadotropin-releasing hormone (GNRH) signaling in the hypothalamus and pituitary gland. In the ovary, it mediates the effects of Phoenixin-14 and Phoenixin-20 induced granulosa cell proliferation during follicular growth. This is Probable G-protein coupled receptor 173 (Gpr173) from Mus musculus (Mouse).